The sequence spans 277 residues: Shikimate dehydrogenase (NADP(+)) (277 aa).

Residues 15–17 and Thr62 each bind shikimate; that span reads SLS. Catalysis depends on Lys66, which acts as the Proton acceptor. Positions 87 and 102 each coordinate shikimate. NADP(+) contacts are provided by residues 127-131, 151-156, and Ile219; these read GAGGA and NRTVDK. Tyr221 serves as a coordination point for shikimate. Gly242 contacts NADP(+).

It belongs to the shikimate dehydrogenase family. In terms of assembly, homodimer.

It carries out the reaction shikimate + NADP(+) = 3-dehydroshikimate + NADPH + H(+). It participates in metabolic intermediate biosynthesis; chorismate biosynthesis; chorismate from D-erythrose 4-phosphate and phosphoenolpyruvate: step 4/7. Involved in the biosynthesis of the chorismate, which leads to the biosynthesis of aromatic amino acids. Catalyzes the reversible NADPH linked reduction of 3-dehydroshikimate (DHSA) to yield shikimate (SA). The polypeptide is Shikimate dehydrogenase (NADP(+)) (Bacillus thuringiensis subsp. konkukian (strain 97-27)).